Here is a 262-residue protein sequence, read N- to C-terminus: MPPRVSRFNLPEPAPRVETGTVKAIAVIPARIASTRLPRKILREIDGRTMLDRVYNAAKGAPMLADVIVATDSQEIMDVCNRHGWNARLTSDQHRSGTDRVHEVAQTVAADVYVNVQGDEPLARPEHLNTLLELMRDETVQVGTLKTPCGKEDVANPNAVKVVTDKTGRALYFSRSTVPYDRDNRGDIAYFKHLGFYAYRKPTLDRFCGWPESSLERSERLEQLRFLENGVDIYVAETPYDTIGVDTEADLKRVEEILRSRN.

This sequence belongs to the KdsB family.

It is found in the cytoplasm. It catalyses the reaction 3-deoxy-alpha-D-manno-oct-2-ulosonate + CTP = CMP-3-deoxy-beta-D-manno-octulosonate + diphosphate. It participates in nucleotide-sugar biosynthesis; CMP-3-deoxy-D-manno-octulosonate biosynthesis; CMP-3-deoxy-D-manno-octulosonate from 3-deoxy-D-manno-octulosonate and CTP: step 1/1. Its pathway is bacterial outer membrane biogenesis; lipopolysaccharide biosynthesis. Functionally, activates KDO (a required 8-carbon sugar) for incorporation into bacterial lipopolysaccharide in Gram-negative bacteria. In Koribacter versatilis (strain Ellin345), this protein is 3-deoxy-manno-octulosonate cytidylyltransferase.